The sequence spans 387 residues: Protochlorophyllide reductase A, chloroplastic (387 aa).

The transit peptide at 1–35 (MALQVQAALLPSALSVPKKGNLSAVVKEPGFLSVS) directs the protein to the chloroplast.

It belongs to the short-chain dehydrogenases/reductases (SDR) family. POR subfamily.

The protein resides in the plastid. It localises to the chloroplast. The catalysed reaction is chlorophyllide a + NADP(+) = protochlorophyllide a + NADPH + H(+). It functions in the pathway porphyrin-containing compound metabolism; chlorophyll biosynthesis. In terms of biological role, phototransformation of protochlorophyllide (Pchlide) to chlorophyllide (Chlide). This Oryza sativa subsp. japonica (Rice) protein is Protochlorophyllide reductase A, chloroplastic (PORA).